A 573-amino-acid polypeptide reads, in one-letter code: Putative ATP-dependent RNA helicase R563 (573 aa).

The Helicase ATP-binding domain occupies 57-233 (INPKTPYKGL…ALTMNLLVRN (177 aa)). ATP is bound at residue 70–77 (HRIGAGKT). The short motif at 179–182 (DEVH) is the DEAH box element. One can recognise a Helicase C-terminal domain in the interval 374-551 (KILRKIKRCN…AFEKALKEAA (178 aa)).

It belongs to the DEAD box helicase family. DEAH subfamily.

It is found in the virion. The catalysed reaction is ATP + H2O = ADP + phosphate + H(+). This is Putative ATP-dependent RNA helicase R563 from Acanthamoeba polyphaga mimivirus (APMV).